A 453-amino-acid chain; its full sequence is UDP-N-acetylmuramoylalanine--D-glutamate ligase (453 aa).

ATP is bound at residue 115–121 (GSNGKTT).

Belongs to the MurCDEF family.

Its subcellular location is the cytoplasm. It catalyses the reaction UDP-N-acetyl-alpha-D-muramoyl-L-alanine + D-glutamate + ATP = UDP-N-acetyl-alpha-D-muramoyl-L-alanyl-D-glutamate + ADP + phosphate + H(+). Its pathway is cell wall biogenesis; peptidoglycan biosynthesis. Its function is as follows. Cell wall formation. Catalyzes the addition of glutamate to the nucleotide precursor UDP-N-acetylmuramoyl-L-alanine (UMA). This is UDP-N-acetylmuramoylalanine--D-glutamate ligase from Koribacter versatilis (strain Ellin345).